The following is a 218-amino-acid chain: Recombination protein RecR (218 aa).

Residues 56 to 71 (CRICCNISREEVCRIC) form a C4-type zinc finger. A Toprim domain is found at 79–195 (GTICVVEEPK…VVSRLASGMP (117 aa)).

This sequence belongs to the RecR family.

Functionally, may play a role in DNA repair. It seems to be involved in an RecBC-independent recombinational process of DNA repair. It may act with RecF and RecO. This chain is Recombination protein RecR, found in Corynebacterium glutamicum (strain R).